We begin with the raw amino-acid sequence, 607 residues long: UvrABC system protein C (607 aa).

The GIY-YIG domain maps to 15–92; sequence SQPGSYQMKD…IKRYRPYFNI (78 aa). In terms of domain architecture, UVR spans 197–232; that stretch reads GKAISDIKKKMKRASDSTEYELAADFRDRLKFIDQT.

Belongs to the UvrC family. As to quaternary structure, interacts with UvrB in an incision complex.

The protein localises to the cytoplasm. Functionally, the UvrABC repair system catalyzes the recognition and processing of DNA lesions. UvrC both incises the 5' and 3' sides of the lesion. The N-terminal half is responsible for the 3' incision and the C-terminal half is responsible for the 5' incision. The polypeptide is UvrABC system protein C (Oenococcus oeni (strain ATCC BAA-331 / PSU-1)).